Here is a 335-residue protein sequence, read N- to C-terminus: 7,8-didemethyl-8-hydroxy-5-deazariboflavin synthase (335 aa).

Positions 1–246 (MTYSKNVFIP…QVAPNLIDPK (246 aa)) constitute a Radical SAM core domain. [4Fe-4S] cluster-binding residues include Cys-15, Cys-19, and Cys-22.

This sequence belongs to the radical SAM superfamily. CofG family. In terms of assembly, consists of two subunits, CofG and CofH. Requires [4Fe-4S] cluster as cofactor.

The catalysed reaction is 5-amino-5-(4-hydroxybenzyl)-6-(D-ribitylimino)-5,6-dihydrouracil + S-adenosyl-L-methionine = 7,8-didemethyl-8-hydroxy-5-deazariboflavin + 5'-deoxyadenosine + L-methionine + NH4(+) + H(+). It participates in cofactor biosynthesis; coenzyme F0 biosynthesis. Functionally, catalyzes the radical-mediated synthesis of 7,8-didemethyl-8-hydroxy-5-deazariboflavin from 5-amino-5-(4-hydroxybenzyl)-6-(D-ribitylimino)-5,6-dihydrouracil. This is 7,8-didemethyl-8-hydroxy-5-deazariboflavin synthase from Methanosarcina mazei (strain ATCC BAA-159 / DSM 3647 / Goe1 / Go1 / JCM 11833 / OCM 88) (Methanosarcina frisia).